The sequence spans 186 residues: MAETSSLISGVAQRYAGSLFELALDAKSVAAVEKDLDRFEALLSGSEDLKRLISSPVFSSEDQLHAIGALADKAGIKGLVGNFLRVVARNRRLFALPGIIAAFRKIAAEHRGEVSADVISAHELSAAQQNELKATLKGVAGKDVTINVTVDPSILGGLIVKMGSRQIDTSLRTKLSSLKLALKEVG.

This sequence belongs to the ATPase delta chain family. In terms of assembly, F-type ATPases have 2 components, F(1) - the catalytic core - and F(0) - the membrane proton channel. F(1) has five subunits: alpha(3), beta(3), gamma(1), delta(1), epsilon(1). F(0) has three main subunits: a(1), b(2) and c(10-14). The alpha and beta chains form an alternating ring which encloses part of the gamma chain. F(1) is attached to F(0) by a central stalk formed by the gamma and epsilon chains, while a peripheral stalk is formed by the delta and b chains.

It is found in the cell inner membrane. Functionally, f(1)F(0) ATP synthase produces ATP from ADP in the presence of a proton or sodium gradient. F-type ATPases consist of two structural domains, F(1) containing the extramembraneous catalytic core and F(0) containing the membrane proton channel, linked together by a central stalk and a peripheral stalk. During catalysis, ATP synthesis in the catalytic domain of F(1) is coupled via a rotary mechanism of the central stalk subunits to proton translocation. Its function is as follows. This protein is part of the stalk that links CF(0) to CF(1). It either transmits conformational changes from CF(0) to CF(1) or is implicated in proton conduction. The protein is ATP synthase subunit delta of Brucella anthropi (strain ATCC 49188 / DSM 6882 / CCUG 24695 / JCM 21032 / LMG 3331 / NBRC 15819 / NCTC 12168 / Alc 37) (Ochrobactrum anthropi).